The sequence spans 71 residues: Non-structural protein 3x (71 aa).

In Feline coronavirus (strain FIPV WSU-79/1146) (FCoV), this protein is Non-structural protein 3x.